A 70-amino-acid chain; its full sequence is MELAARMGETLTQAVVVAVREQLARRTGRTRSISLREELAAIGRRCAALPVLDTRAADTILGYDERGLPA.

In terms of biological role, antitoxin component of a possible type II toxin-antitoxin (TA) system. The cognate toxin is VapC34. This chain is Putative antitoxin VapB34 (vapB34), found in Mycobacterium tuberculosis (strain CDC 1551 / Oshkosh).